Reading from the N-terminus, the 427-residue chain is Adenylosuccinate synthetase (427 aa).

Residues 13-19 (GDEGKGK) and 41-43 (GHT) each bind GTP. The active-site Proton acceptor is the Asp14. 2 residues coordinate Mg(2+): Asp14 and Gly41. IMP-binding positions include 14–17 (DEGK), 39–42 (NAGH), Thr129, Arg143, Gln224, Thr239, and Arg303. His42 functions as the Proton donor in the catalytic mechanism. The tract at residues 117–137 (QEKQRGEESLGTTKRGIGPAY) is disordered. A substrate-binding site is contributed by 299–305 (TTTGRPR). Residues Arg305, 331 to 333 (KLD), and 414 to 416 (GTG) each bind GTP.

This sequence belongs to the adenylosuccinate synthetase family. Homodimer. Mg(2+) is required as a cofactor.

It localises to the cytoplasm. The catalysed reaction is IMP + L-aspartate + GTP = N(6)-(1,2-dicarboxyethyl)-AMP + GDP + phosphate + 2 H(+). Its pathway is purine metabolism; AMP biosynthesis via de novo pathway; AMP from IMP: step 1/2. Its function is as follows. Plays an important role in the de novo pathway of purine nucleotide biosynthesis. Catalyzes the first committed step in the biosynthesis of AMP from IMP. This chain is Adenylosuccinate synthetase, found in Caldicellulosiruptor saccharolyticus (strain ATCC 43494 / DSM 8903 / Tp8T 6331).